The sequence spans 117 residues: Large ribosomal subunit protein bL20 (117 aa).

It belongs to the bacterial ribosomal protein bL20 family.

Its function is as follows. Binds directly to 23S ribosomal RNA and is necessary for the in vitro assembly process of the 50S ribosomal subunit. It is not involved in the protein synthesizing functions of that subunit. This chain is Large ribosomal subunit protein bL20 (rplT), found in Rickettsia prowazekii (strain Madrid E).